The sequence spans 477 residues: UDP-N-acetylmuramoylalanine--D-glutamate ligase (477 aa).

Position 127–133 (Gly-127–Thr-133) interacts with ATP.

Belongs to the MurCDEF family.

It is found in the cytoplasm. The catalysed reaction is UDP-N-acetyl-alpha-D-muramoyl-L-alanine + D-glutamate + ATP = UDP-N-acetyl-alpha-D-muramoyl-L-alanyl-D-glutamate + ADP + phosphate + H(+). The protein operates within cell wall biogenesis; peptidoglycan biosynthesis. In terms of biological role, cell wall formation. Catalyzes the addition of glutamate to the nucleotide precursor UDP-N-acetylmuramoyl-L-alanine (UMA). This is UDP-N-acetylmuramoylalanine--D-glutamate ligase from Prochlorococcus marinus (strain MIT 9515).